A 385-amino-acid chain; its full sequence is Sesquiterpene alcohol synthase (385 aa).

Residues Asp123 and Asp127 each coordinate Mg(2+). Residues Asp123 to Asp127 carry the DDXXD motif motif.

This sequence belongs to the terpene synthase family. Mg(2+) serves as cofactor. In terms of tissue distribution, specifically expressed in tissues lining the cuticle of the abdominal sternites of mature males.

It catalyses the reaction (2E,6E)-farnesyl diphosphate + H2O = (1S,6S,7R)-sesquipiperitol + diphosphate. It participates in pheromone biosynthesis. Sesquiterpene alcohol synthase that catalyzes the formation of (1S,6S,7R)-sesquipiperitol, a terpene intermediate in murgantiol biosynthesis, a male-released aggregation pheromone. The protein is Sesquiterpene alcohol synthase of Murgantia histrionica (Harlequin bug).